A 155-amino-acid polypeptide reads, in one-letter code: Deoxyuridine 5'-triphosphate nucleotidohydrolase (155 aa).

Substrate-binding positions include 74 to 76 (RSG), asparagine 87, and 91 to 93 (TID).

Belongs to the dUTPase family. The cofactor is Mg(2+).

It carries out the reaction dUTP + H2O = dUMP + diphosphate + H(+). The protein operates within pyrimidine metabolism; dUMP biosynthesis; dUMP from dCTP (dUTP route): step 2/2. In terms of biological role, this enzyme is involved in nucleotide metabolism: it produces dUMP, the immediate precursor of thymidine nucleotides and it decreases the intracellular concentration of dUTP so that uracil cannot be incorporated into DNA. The sequence is that of Deoxyuridine 5'-triphosphate nucleotidohydrolase from Cereibacter sphaeroides (strain ATCC 17023 / DSM 158 / JCM 6121 / CCUG 31486 / LMG 2827 / NBRC 12203 / NCIMB 8253 / ATH 2.4.1.) (Rhodobacter sphaeroides).